A 245-amino-acid chain; its full sequence is 1-(5-phosphoribosyl)-5-[(5-phosphoribosylamino)methylideneamino] imidazole-4-carboxamide isomerase (245 aa).

Asp8 (proton acceptor) is an active-site residue. Asp130 serves as the catalytic Proton donor.

It belongs to the HisA/HisF family.

The protein resides in the cytoplasm. The catalysed reaction is 1-(5-phospho-beta-D-ribosyl)-5-[(5-phospho-beta-D-ribosylamino)methylideneamino]imidazole-4-carboxamide = 5-[(5-phospho-1-deoxy-D-ribulos-1-ylimino)methylamino]-1-(5-phospho-beta-D-ribosyl)imidazole-4-carboxamide. It functions in the pathway amino-acid biosynthesis; L-histidine biosynthesis; L-histidine from 5-phospho-alpha-D-ribose 1-diphosphate: step 4/9. This Azotobacter vinelandii (strain DJ / ATCC BAA-1303) protein is 1-(5-phosphoribosyl)-5-[(5-phosphoribosylamino)methylideneamino] imidazole-4-carboxamide isomerase.